Here is a 604-residue protein sequence, read N- to C-terminus: Sulfite reductase [NADPH] flavoprotein alpha-component (604 aa).

The Flavodoxin-like domain maps to 65–203; that stretch reads VTILYGSQTG…AAGQWHADVL (139 aa). Residues 71 to 76, 118 to 121, and 154 to 163 contribute to the FMN site; these read SQTGNG, STHG, and LGDSSYEFFC. Residues 236-453 form the FAD-binding FR-type domain; that stretch reads QNPYSAEVLV…VEPNKHFRLP (218 aa). FAD-binding positions include Thr324, Leu358, 392–395, 410–412, and 425–428; these read RLYS, TVA, and GGAS. Residues 524 to 525, 530 to 534, and Asp566 each bind NADP(+); these read SR and KIYVQ. Tyr604 contributes to the FAD binding site.

It belongs to the NADPH-dependent sulphite reductase flavoprotein subunit CysJ family. In the N-terminal section; belongs to the flavodoxin family. The protein in the C-terminal section; belongs to the flavoprotein pyridine nucleotide cytochrome reductase family. As to quaternary structure, alpha(8)-beta(8). The alpha component is a flavoprotein, the beta component is a hemoprotein. FAD serves as cofactor. It depends on FMN as a cofactor.

It catalyses the reaction hydrogen sulfide + 3 NADP(+) + 3 H2O = sulfite + 3 NADPH + 4 H(+). It participates in sulfur metabolism; hydrogen sulfide biosynthesis; hydrogen sulfide from sulfite (NADPH route): step 1/1. Its function is as follows. Component of the sulfite reductase complex that catalyzes the 6-electron reduction of sulfite to sulfide. This is one of several activities required for the biosynthesis of L-cysteine from sulfate. The flavoprotein component catalyzes the electron flow from NADPH -&gt; FAD -&gt; FMN to the hemoprotein component. The polypeptide is Sulfite reductase [NADPH] flavoprotein alpha-component (Shewanella sp. (strain ANA-3)).